Here is a 226-residue protein sequence, read N- to C-terminus: RING-H2 finger protein ATL75 (226 aa).

A helical membrane pass occupies residues 60–80 (LMLLSVLICGIICCLGLHYII). The RING-type; atypical zinc-finger motif lies at 136–178 (CVICLSDFVSGEQIRMLPKCHHGFHVRCIDKWLQQHLTCPKCR).

It belongs to the RING-type zinc finger family. ATL subfamily.

The protein localises to the membrane. It catalyses the reaction S-ubiquitinyl-[E2 ubiquitin-conjugating enzyme]-L-cysteine + [acceptor protein]-L-lysine = [E2 ubiquitin-conjugating enzyme]-L-cysteine + N(6)-ubiquitinyl-[acceptor protein]-L-lysine.. It participates in protein modification; protein ubiquitination. This is RING-H2 finger protein ATL75 (ATL75) from Arabidopsis thaliana (Mouse-ear cress).